The sequence spans 258 residues: Type III pantothenate kinase (258 aa).

ATP is bound at residue 6 to 13 (DVGNTNTV). Residues Y100 and 107–110 (GADR) contribute to the substrate site. Catalysis depends on D109, which acts as the Proton acceptor. D129 contributes to the K(+) binding site. ATP is bound at residue T132. T184 serves as a coordination point for substrate.

This sequence belongs to the type III pantothenate kinase family. Homodimer. NH4(+) serves as cofactor. Requires K(+) as cofactor.

It is found in the cytoplasm. The catalysed reaction is (R)-pantothenate + ATP = (R)-4'-phosphopantothenate + ADP + H(+). It participates in cofactor biosynthesis; coenzyme A biosynthesis; CoA from (R)-pantothenate: step 1/5. Catalyzes the phosphorylation of pantothenate (Pan), the first step in CoA biosynthesis. In Geobacillus thermodenitrificans (strain NG80-2), this protein is Type III pantothenate kinase.